Reading from the N-terminus, the 354-residue chain is E2F transcription factor-like E2FF (354 aa).

A DNA-binding region spans residues 21–86 (RKEKSLGVLV…RGKNQYSWKG (66 aa)). Residues 104-143 (ERLGYSSSNNSDKVSNGCEREEPLTLTPDDQENSSSSKMD) are disordered. Residues 108 to 117 (YSSSNNSDKV) show a composition bias toward polar residues. A DNA-binding region spans residues 145-225 (KKEKSLWLLA…TRKPAYRWLG (81 aa)).

The protein belongs to the E2F/DP family. High expression in young cotyledons and leaves, hypocotyls, shoot apical meristem, roots and mature pollen grains, moderate in developing trichomes, flowers and at early stages of developing anthers, and barely detectable in mature leaves. Not detected in primary root meristem, emerging lateral roots, pistils, developing embryos and siliques.

The protein resides in the nucleus. Its subcellular location is the cytoplasm. Inhibitor of E2F-dependent activation of gene expression. Binds specifically the E2 recognition site without interacting with DP proteins and prevents transcription activation by E2F/DP heterodimers. Does not bind retinoblastoma-related proteins. Acts as a growth regulator but is not associated with changes in the expression of cell cycle marker genes or in nuclear ploidy levels. Has no effect on cell proliferation, but may repress cell wall biosynthesis genes during cell elongation in differentiated cells. The protein is E2F transcription factor-like E2FF (E2FF) of Arabidopsis thaliana (Mouse-ear cress).